A 334-amino-acid polypeptide reads, in one-letter code: Probable tRNA pseudouridine synthase B (334 aa).

Asp-82 serves as the catalytic Nucleophile. The PUA domain occupies 250–325 (LPKIWIKDSA…IAVDVEKVFM (76 aa)).

Belongs to the pseudouridine synthase TruB family. Type 2 subfamily.

The catalysed reaction is uridine(55) in tRNA = pseudouridine(55) in tRNA. In terms of biological role, could be responsible for synthesis of pseudouridine from uracil-55 in the psi GC loop of transfer RNAs. The protein is Probable tRNA pseudouridine synthase B of Pyrococcus horikoshii (strain ATCC 700860 / DSM 12428 / JCM 9974 / NBRC 100139 / OT-3).